A 239-amino-acid chain; its full sequence is Prolactin-8A4 (239 aa).

The N-terminal stretch at 1–31 (MMKLALSQPPFSGTLLMLVVSILLLWEKAAS) is a signal peptide. Disulfide bonds link cysteine 35/cysteine 42 and cysteine 102/cysteine 215. N-linked (GlcNAc...) asparagine glycosylation is found at asparagine 211 and asparagine 218. Cysteine 232 and cysteine 239 are oxidised to a cystine.

Belongs to the somatotropin/prolactin family. In terms of tissue distribution, placental basal zone cells.

The protein localises to the secreted. This chain is Prolactin-8A4 (Prl8a4), found in Rattus norvegicus (Rat).